Reading from the N-terminus, the 111-residue chain is Photosystem II reaction center Psb28 protein (111 aa).

It belongs to the Psb28 family. In terms of assembly, part of the photosystem II complex.

It is found in the cellular thylakoid membrane. The polypeptide is Photosystem II reaction center Psb28 protein (Gloeothece citriformis (strain PCC 7424) (Cyanothece sp. (strain PCC 7424))).